The following is a 632-amino-acid chain: MSPSLNEPERLNRQAQGLACNECRARKLRCDRVRPTCGTCESLGVTCTPNSVRQPRGPRKGYLKTLQSRISALERQWNGQQKAAGGSPGESPPCSEGGQTLRAVSESTSDGVHDEDHANGARPPSSQSSIEQPILQPTVSLDGISALHGFAPVNSPFAFALPGTDPSKTVDLFSHMECFPSMPTKLDPRAYVPQQLTPNSTMSNGQFDLPTDLSVTSEFQLPELMKADLSHLYFDRVHPFAPILNKRRYFARAARPVSEQGAMTCLQHAMWTLAAWLGSQFKHIQKDLYIYTRGLLEKWELNMHPGNPPIELAQARLFLAIYEIMQVNYERGWLSAGRCFRLIQLMKLHEIDVPDGISESGISFGEIEERRRTFWMAYSLDRFINLINKMPLTLNEQVIFTRLPAPEGAFQRERPVQTQFLSEFMAGDDDLQIVSPFSACIVVMTISGRCLSHQQQCMVERAYGGMPQDFITRHQWLEGILMSKGKAIVDCISNDLDDELTDPMLLFTNMAAHATTLLLGMTMQTGLCNYESLISGFEERATEAAQKILHLCQRLNECGYFKVHPFTPIPLVFCAEWAQGRKNQNPAFEPLHNSMLCSLRDLSVVNMLAETCLARLNDSNPQMETDMSKSQS.

Residues 20–47 constitute a DNA-binding region (zn(2)-C6 fungal-type); sequence CNECRARKLRCDRVRPTCGTCESLGVTC. The interval 77–130 is disordered; it reads WNGQQKAAGGSPGESPPCSEGGQTLRAVSESTSDGVHDEDHANGARPPSSQSSI.

It is found in the nucleus. Transcription factor that regulates the expression of the gene cluster that mediates the biosynthesis of azaterrilone A and other azaphilones, a class of fungal metabolites characterized by a highly oxygenated pyrano-quinone bicyclic core and exhibiting a broad range of bioactivities. The chain is Transcription factor tazR from Aspergillus terreus (strain NIH 2624 / FGSC A1156).